We begin with the raw amino-acid sequence, 347 residues long: Very-long-chain 3-oxoacyl-CoA reductase (347 aa).

Residues 20–40 traverse the membrane as a helical segment; sequence LLWVVFGLGVLKCTTLSLRFL. 7 residues coordinate NADP(+): Val66, Asp120, Asn147, Tyr223, Lys227, Val256, and Ser258. The active-site Proton donor is the Tyr223. Catalysis depends on Lys227, which acts as the Lowers pKa of active site Tyr.

It belongs to the short-chain dehydrogenases/reductases (SDR) family. Interacts with the fatty acid elongation system components ELO3 and TSC13.

The protein localises to the endoplasmic reticulum membrane. The enzyme catalyses a very-long-chain (3R)-3-hydroxyacyl-CoA + NADP(+) = a very-long-chain 3-oxoacyl-CoA + NADPH + H(+). The protein operates within lipid metabolism; fatty acid biosynthesis. Functionally, component of the microsomal membrane bound fatty acid elongation system, which produces the 26-carbon very long-chain fatty acids (VLCFA) from palmitate. Catalyzes the reduction of the 3-ketoacyl-CoA intermediate that is formed in each cycle of fatty acid elongation. VLCFAs serve as precursors for ceramide and sphingolipids. The polypeptide is Very-long-chain 3-oxoacyl-CoA reductase (Saccharomyces cerevisiae (strain RM11-1a) (Baker's yeast)).